Here is a 291-residue protein sequence, read N- to C-terminus: N-acetylmannosamine kinase (291 aa).

ATP is bound by residues 5-12 and 132-139; these read AIDIGGTK and GVGGGVVC. The Zn(2+) site is built by His156, Cys166, Cys168, and Cys173.

This sequence belongs to the ROK (NagC/XylR) family. NanK subfamily. Homodimer.

It catalyses the reaction an N-acyl-D-mannosamine + ATP = an N-acyl-D-mannosamine 6-phosphate + ADP + H(+). The protein operates within amino-sugar metabolism; N-acetylneuraminate degradation; D-fructose 6-phosphate from N-acetylneuraminate: step 2/5. In terms of biological role, catalyzes the phosphorylation of N-acetylmannosamine (ManNAc) to ManNAc-6-P. In Salmonella agona (strain SL483), this protein is N-acetylmannosamine kinase.